A 1196-amino-acid chain; its full sequence is DNA polymerase beta (1196 aa).

The protein belongs to the DNA polymerase type-B family.

It catalyses the reaction DNA(n) + a 2'-deoxyribonucleoside 5'-triphosphate = DNA(n+1) + diphosphate. Its function is as follows. DNA-directed DNA polymerase involved in viral DNA replication. In African swine fever virus (isolate Pig/Kenya/KEN-50/1950) (ASFV), this protein is DNA polymerase beta.